A 1152-amino-acid polypeptide reads, in one-letter code: DNA-directed RNA polymerase subunit beta' (1152 aa).

Zn(2+) is bound by residues cysteine 60, cysteine 62, cysteine 75, and cysteine 78. Aspartate 449, aspartate 451, and aspartate 453 together coordinate Mg(2+). Zn(2+) contacts are provided by cysteine 779, cysteine 853, cysteine 860, and cysteine 863.

The protein belongs to the RNA polymerase beta' chain family. As to quaternary structure, the RNAP catalytic core consists of 2 alpha, 1 beta, 1 beta' and 1 omega subunit. When a sigma factor is associated with the core the holoenzyme is formed, which can initiate transcription. Requires Mg(2+) as cofactor. Zn(2+) serves as cofactor.

The catalysed reaction is RNA(n) + a ribonucleoside 5'-triphosphate = RNA(n+1) + diphosphate. DNA-dependent RNA polymerase catalyzes the transcription of DNA into RNA using the four ribonucleoside triphosphates as substrates. The protein is DNA-directed RNA polymerase subunit beta' of Carboxydothermus hydrogenoformans (strain ATCC BAA-161 / DSM 6008 / Z-2901).